Consider the following 475-residue polypeptide: MSPQTETKTGAGFKAGVKDYRLTYYTPDYQVSETDILAAFRMTPQPGVPAEECGAAVAAESSTGTWTTVWTDGLTQLDRYKGRCYDLEPVPGESNQYIAYVAYPIDLFEEGSVTNLLTSIVGNVFGFKALRALRLEDLRIPPAYSKTFWGPPHGIQVERDRLNKYGRPLLGCTIKPKLGLSAKNYGRAVYECLRGGLDFTKDDENVNSQSFMRWRDRFLFCAEAIYKAQTETGEVKGHYLNATAGTCEEMYKRASFAAQIGVPIIMHDYLTGGFTANTSLAMYCRDNGLLLHIHRAMHAVIDRQRNHGIHFRVLAKTLRMSGGDHLHSGTVVGKLEGEREVTLGFVDLMRDAYVEKDRSRGIYFTQDWCGMGGTMPVASGGIHVWHMPALTEIFGDDACLQFGGGTLGHPWGNAPGAAANRVASEACVQARNEGRDLSREGGDVIREACKWSPELAAACEVWKEIKFEFETIDKL.

Asn123 and Thr173 together coordinate substrate. The active-site Proton acceptor is Lys175. Residue Lys177 coordinates substrate. Positions 201, 203, and 204 each coordinate Mg(2+). N6-carboxylysine is present on Lys201. Residue His294 is the Proton acceptor of the active site. Residues Arg295, His327, and Ser379 each contribute to the substrate site.

Belongs to the RuBisCO large chain family. Type I subfamily. In terms of assembly, heterohexadecamer of 8 large chains and 8 small chains; disulfide-linked. The disulfide link is formed within the large subunit homodimers. Requires Mg(2+) as cofactor. In terms of processing, the disulfide bond which can form in the large chain dimeric partners within the hexadecamer appears to be associated with oxidative stress and protein turnover.

The protein localises to the plastid. The protein resides in the chloroplast. It carries out the reaction 2 (2R)-3-phosphoglycerate + 2 H(+) = D-ribulose 1,5-bisphosphate + CO2 + H2O. The catalysed reaction is D-ribulose 1,5-bisphosphate + O2 = 2-phosphoglycolate + (2R)-3-phosphoglycerate + 2 H(+). Functionally, ruBisCO catalyzes two reactions: the carboxylation of D-ribulose 1,5-bisphosphate, the primary event in carbon dioxide fixation, as well as the oxidative fragmentation of the pentose substrate in the photorespiration process. Both reactions occur simultaneously and in competition at the same active site. The sequence is that of Ribulose bisphosphate carboxylase large chain from Euglena gracilis.